The chain runs to 132 residues: RING-H2 finger protein ATL39 (132 aa).

Residues 10–30 (TIVFAFASIGFIAFYIINYYI) traverse the membrane as a helical segment. Residues 85–127 (CVVCLNEFKDDETLRLVPPCVHVFHADCVDIWLSHSSTCPICR) form an RING-type; atypical zinc finger.

Belongs to the RING-type zinc finger family. ATL subfamily.

Its subcellular location is the membrane. It catalyses the reaction S-ubiquitinyl-[E2 ubiquitin-conjugating enzyme]-L-cysteine + [acceptor protein]-L-lysine = [E2 ubiquitin-conjugating enzyme]-L-cysteine + N(6)-ubiquitinyl-[acceptor protein]-L-lysine.. It participates in protein modification; protein ubiquitination. The sequence is that of RING-H2 finger protein ATL39 (ATL39) from Arabidopsis thaliana (Mouse-ear cress).